Here is a 439-residue protein sequence, read N- to C-terminus: Methylenetetrahydrofolate--tRNA-(uracil-5-)-methyltransferase TrmFO (439 aa).

An FAD-binding site is contributed by 9-14 (GAGLAG).

It belongs to the MnmG family. TrmFO subfamily. FAD serves as cofactor.

The protein resides in the cytoplasm. The enzyme catalyses uridine(54) in tRNA + (6R)-5,10-methylene-5,6,7,8-tetrahydrofolate + NADH + H(+) = 5-methyluridine(54) in tRNA + (6S)-5,6,7,8-tetrahydrofolate + NAD(+). It carries out the reaction uridine(54) in tRNA + (6R)-5,10-methylene-5,6,7,8-tetrahydrofolate + NADPH + H(+) = 5-methyluridine(54) in tRNA + (6S)-5,6,7,8-tetrahydrofolate + NADP(+). Functionally, catalyzes the folate-dependent formation of 5-methyl-uridine at position 54 (M-5-U54) in all tRNAs. The polypeptide is Methylenetetrahydrofolate--tRNA-(uracil-5-)-methyltransferase TrmFO (Lactobacillus delbrueckii subsp. bulgaricus (strain ATCC BAA-365 / Lb-18)).